We begin with the raw amino-acid sequence, 40 residues long: Protamine-2 (40 aa).

Residues 1–40 (MPPRRKRVSSAPRRRRRTYRRTTAHKHQERPVHRRRRRRH) form a disordered region.

Testis.

The protein resides in the nucleus. It localises to the chromosome. Its function is as follows. Protamines substitute for histones in the chromatin of sperm during the haploid phase of spermatogenesis. They compact sperm DNA into a highly condensed, stable and inactive complex. This chain is Protamine-2 (PBP2), found in Bufo japonicus (Japanese common toad).